We begin with the raw amino-acid sequence, 599 residues long: Beta-(1--&gt;2)glucan export ATP-binding/permease protein NdvA (599 aa).

Residues 21–301 enclose the ABC transmembrane type-1 domain; sequence TITMCVASVL…ISAFINQTVT (281 aa). Helical transmembrane passes span 22–42, 55–75, 156–176, 248–268, and 276–296; these read ITMC…PVLF, IFSP…AAVF, MRMS…GQLV, MAST…VTKG, and IAFI…SAFI. An ABC transporter domain is found at 335–569; it reads IVFDNVTYEF…GGRFSDLLRA (235 aa). 368–375 is an ATP binding site; the sequence is GPTGAGKT.

The protein belongs to the ABC transporter superfamily. Beta-(1--&gt;2)glucan exporter (TC 3.A.1.108.1) family. As to quaternary structure, homodimer.

Its subcellular location is the cell inner membrane. It carries out the reaction [(1-&gt;2)-beta-D-glucosyl](n)(in) + ATP + H2O = [(1-&gt;2)-beta-D-glucosyl](n)(out) + ADP + phosphate + H(+). In terms of biological role, involved in beta-(1--&gt;2)glucan export. Its export to the periplasmic space is required to exert its action as a virulence factor. Transmembrane domains (TMD) form a pore in the inner membrane and the ATP-binding domain (NBD) is responsible for energy generation. The protein is Beta-(1--&gt;2)glucan export ATP-binding/permease protein NdvA of Brucella abortus (strain 2308).